A 741-amino-acid chain; its full sequence is Translation initiation factor IF-2 (741 aa).

2 stretches are compositionally biased toward basic and acidic residues: residues His48–Lys74 and Lys107–Ala123. The segment at His48 to Leu158 is disordered. Residues Ala127 to Lys139 are compositionally biased toward basic residues. The segment covering Gln140–Pro151 has biased composition (low complexity). A tr-type G domain is found at Glu242 to Lys411. The interval Gly251–Thr258 is G1. Residue Gly251–Thr258 participates in GTP binding. Residues Gly276–His280 form a G2 region. A G3 region spans residues Asp297–Gly300. Residues Asp297–His301 and Asn351–Asp354 contribute to the GTP site. The G4 stretch occupies residues Asn351 to Asp354. Positions Ser387–Lys389 are G5.

Belongs to the TRAFAC class translation factor GTPase superfamily. Classic translation factor GTPase family. IF-2 subfamily.

The protein localises to the cytoplasm. Functionally, one of the essential components for the initiation of protein synthesis. Protects formylmethionyl-tRNA from spontaneous hydrolysis and promotes its binding to the 30S ribosomal subunits. Also involved in the hydrolysis of GTP during the formation of the 70S ribosomal complex. The chain is Translation initiation factor IF-2 (infB) from Geobacillus stearothermophilus (Bacillus stearothermophilus).